The chain runs to 276 residues: MTLKKLNLHLVSDSSGETVISVAKSALKHFRSVETIEYVWSFVKGEEQIDKILEEINRKSDEHNFVICTITDDELRKYLKDNCIKLKIPYRAILSHIIREISSYLEIEKDEKLDLHTEINNEYFQRIEAINYTINHDDGQNIQDIDKADIILVGVSRTSKSPTSTYLAYRGYKVANIPFVSGVPFYVDLAKLKNKLTIGVTIDVSRLIEIRKNRLTSINNEDNNIYANPEKVEKEIKEAEELFKQNNWPIIDVTQKSIEEVSATIIQYFNKMLSID.

154-161 (GVSRTSKS) provides a ligand contact to ADP.

This sequence belongs to the pyruvate, phosphate/water dikinase regulatory protein family. PDRP subfamily.

The catalysed reaction is N(tele)-phospho-L-histidyl/L-threonyl-[pyruvate, phosphate dikinase] + ADP = N(tele)-phospho-L-histidyl/O-phospho-L-threonyl-[pyruvate, phosphate dikinase] + AMP + H(+). The enzyme catalyses N(tele)-phospho-L-histidyl/O-phospho-L-threonyl-[pyruvate, phosphate dikinase] + phosphate + H(+) = N(tele)-phospho-L-histidyl/L-threonyl-[pyruvate, phosphate dikinase] + diphosphate. Its function is as follows. Bifunctional serine/threonine kinase and phosphorylase involved in the regulation of the pyruvate, phosphate dikinase (PPDK) by catalyzing its phosphorylation/dephosphorylation. This Wolbachia pipientis wMel protein is Putative pyruvate, phosphate dikinase regulatory protein.